Here is an 873-residue protein sequence, read N- to C-terminus: Sine oculis-binding protein homolog (873 aa).

Basic and acidic residues predominate over residues 1–14 (MAEMEKEGRPPENK). The interval 1–26 (MAEMEKEGRPPENKRSRKPAHPVKRE) is disordered. 2 FCS-type zinc fingers span residues 142–180 (DDVSNVQIMCAWCQKVGIKRYSLSMGSEVKSFCSEKCFA) and 216–256 (FKNN…KCLN). 3 disordered regions span residues 308–339 (RRKAPSPVATAGQSQGPGPSASTTVSPSDTAN), 413–484 (RGPP…PGAP), and 550–646 (KPPN…PGVL). Over residues 318–339 (AGQSQGPGPSASTTVSPSDTAN) the composition is skewed to polar residues. Positions 417–433 (HHASNPNSPLSNPMLPG) are enriched in low complexity. Pro residues predominate over residues 460–484 (IHPPSTPTMPGNPPGLLPPPPPGAP). Residues 614-625 (EHGRSEVVDLTR) show a composition bias toward basic and acidic residues. The short motif at 620 to 624 (VVDLT) is the SUMO interaction motif 1 (SIM); mediates the binding to polysumoylated substrates element. Ser-629 carries the phosphoserine modification. The SUMO interaction motif 2 (SIM); mediates the binding to polysumoylated substrates signature appears at 653 to 657 (VIDLT). Lys-677 is covalently cross-linked (Glycyl lysine isopeptide (Lys-Gly) (interchain with G-Cter in SUMO2)). Ser-699 is subject to Phosphoserine. The interval 730–771 (AAAEGAKSAEPPPEQPPPPPPPAPPKKLLSPEEPAVSELESV) is disordered. Residues 739-754 (EPPPEQPPPPPPPAPP) are compositionally biased toward pro residues.

The protein belongs to the SOBP family. In terms of assembly, interacts (via SIM domains) with SUMO1 and SUMO2.

In terms of biological role, implicated in development of the cochlea. The polypeptide is Sine oculis-binding protein homolog (Homo sapiens (Human)).